The primary structure comprises 337 residues: 1-aminocyclopropane-1-carboxylate deaminase (337 aa).

The residue at position 50 (Lys50) is an N6-(pyridoxal phosphate)lysine. Residue Ser77 is the Nucleophile of the active site.

It belongs to the ACC deaminase/D-cysteine desulfhydrase family. In terms of assembly, homotrimer. Requires pyridoxal 5'-phosphate as cofactor.

The catalysed reaction is 1-aminocyclopropane-1-carboxylate + H2O = 2-oxobutanoate + NH4(+). Its function is as follows. Catalyzes a cyclopropane ring-opening reaction, the irreversible conversion of 1-aminocyclopropane-1-carboxylate (ACC) to ammonia and alpha-ketobutyrate. Allows growth on ACC as a nitrogen source. The chain is 1-aminocyclopropane-1-carboxylate deaminase from Methylobacterium nodulans (strain LMG 21967 / CNCM I-2342 / ORS 2060).